A 243-amino-acid polypeptide reads, in one-letter code: tRNA pseudouridine synthase A (243 aa).

D53 functions as the Nucleophile in the catalytic mechanism. Y111 provides a ligand contact to substrate.

The protein belongs to the tRNA pseudouridine synthase TruA family. In terms of assembly, homodimer.

It carries out the reaction uridine(38/39/40) in tRNA = pseudouridine(38/39/40) in tRNA. Formation of pseudouridine at positions 38, 39 and 40 in the anticodon stem and loop of transfer RNAs. The protein is tRNA pseudouridine synthase A of Pelodictyon phaeoclathratiforme (strain DSM 5477 / BU-1).